A 70-amino-acid polypeptide reads, in one-letter code: DNA-directed RNA polymerases I, II, and III subunit rpabc5 (70 aa).

Zn(2+) contacts are provided by C7, C10, C44, and C45.

The protein belongs to the archaeal Rpo10/eukaryotic RPB10 RNA polymerase subunit family. In terms of assembly, component of the RNA polymerase I (Pol I), RNA polymerase II (Pol II) and RNA polymerase III (Pol III) complexes.

The protein localises to the nucleus. Its function is as follows. DNA-dependent RNA polymerase catalyzes the transcription of DNA into RNA using the four ribonucleoside triphosphates as substrates. Common component of RNA polymerases I, II and III which synthesize ribosomal RNA precursors, mRNA precursors and many functional non-coding RNAs, and a small RNAs, such as 5S rRNA and tRNAs, respectively. Pol II is the central component of the basal RNA polymerase II transcription machinery. Pols are composed of mobile elements that move relative to each other. In Pol II, RBP10 is part of the core element with the central large cleft. The protein is DNA-directed RNA polymerases I, II, and III subunit rpabc5 (polr2l) of Dictyostelium discoideum (Social amoeba).